Here is a 174-residue protein sequence, read N- to C-terminus: 3-hydroxyanthranilate 3,4-dioxygenase (174 aa).

Arg-47 is a binding site for O2. Residues His-51, Glu-57, and His-95 each contribute to the Fe cation site. Glu-57 provides a ligand contact to substrate. Substrate-binding residues include Arg-99 and Glu-110. The Fe cation site is built by Cys-125, Cys-128, Cys-162, and Cys-165.

It belongs to the 3-HAO family. As to quaternary structure, homodimer. Fe(2+) is required as a cofactor.

The enzyme catalyses 3-hydroxyanthranilate + O2 = (2Z,4Z)-2-amino-3-carboxymuconate 6-semialdehyde. Its pathway is cofactor biosynthesis; NAD(+) biosynthesis; quinolinate from L-kynurenine: step 3/3. Its activity is regulated as follows. Inhibited by 4-chloro-3-hydroxyanthranilate. Mechanism of inactivation involves the oxidation of the catalytic active site Fe(2+) to the catalytically inactive Fe(3+) oxidation state, superoxide production, and formation of two disulfide bonds between Cys-125 and Cys-128, and Cys-162 and Cys-165. Enzyme can be reactivated under reducing conditions. In terms of biological role, catalyzes the oxidative ring opening of 3-hydroxyanthranilate to 2-amino-3-carboxymuconate semialdehyde, which spontaneously cyclizes to quinolinate. The protein is 3-hydroxyanthranilate 3,4-dioxygenase of Cupriavidus metallidurans (strain ATCC 43123 / DSM 2839 / NBRC 102507 / CH34) (Ralstonia metallidurans).